The sequence spans 79 residues: Omega-phylotoxin-To1a (79 aa).

The N-terminal stretch at 1–21 (MKKTFCFILILVCIVLKSVNA) is a signal peptide. Residues 22–38 (EEEDNFEESSLEMETAR) constitute a propeptide that is removed on maturation. Intrachain disulfides connect C39–C59, C46–C63, C58–C78, and C65–C76.

As to expression, expressed by the venom duct.

The protein resides in the secreted. In terms of biological role, insect-specific toxin that probably acts as an inhibitor of presynaptic insect calcium channels, presumably Cav2 subtype. In vivo, induces immediate paralysis on insects, followed by death when high doses are injected. The sequence is that of Omega-phylotoxin-To1a from Tibellus oblongus (Oblong running crab spider).